A 207-amino-acid chain; its full sequence is ATP phosphoribosyltransferase (207 aa).

The protein belongs to the ATP phosphoribosyltransferase family. Short subfamily. As to quaternary structure, heteromultimer composed of HisG and HisZ subunits.

It localises to the cytoplasm. It carries out the reaction 1-(5-phospho-beta-D-ribosyl)-ATP + diphosphate = 5-phospho-alpha-D-ribose 1-diphosphate + ATP. The protein operates within amino-acid biosynthesis; L-histidine biosynthesis; L-histidine from 5-phospho-alpha-D-ribose 1-diphosphate: step 1/9. Its function is as follows. Catalyzes the condensation of ATP and 5-phosphoribose 1-diphosphate to form N'-(5'-phosphoribosyl)-ATP (PR-ATP). Has a crucial role in the pathway because the rate of histidine biosynthesis seems to be controlled primarily by regulation of HisG enzymatic activity. This chain is ATP phosphoribosyltransferase, found in Dictyoglomus thermophilum (strain ATCC 35947 / DSM 3960 / H-6-12).